Consider the following 411-residue polypeptide: Phosphoribosylaminoimidazole-succinocarboxamide synthase, chloroplastic (411 aa).

A chloroplast-targeting transit peptide spans M1–S53.

Belongs to the SAICAR synthetase family.

It is found in the plastid. It localises to the chloroplast. The enzyme catalyses 5-amino-1-(5-phospho-D-ribosyl)imidazole-4-carboxylate + L-aspartate + ATP = (2S)-2-[5-amino-1-(5-phospho-beta-D-ribosyl)imidazole-4-carboxamido]succinate + ADP + phosphate + 2 H(+). It participates in purine metabolism; IMP biosynthesis via de novo pathway; 5-amino-1-(5-phospho-D-ribosyl)imidazole-4-carboxamide from 5-amino-1-(5-phospho-D-ribosyl)imidazole-4-carboxylate: step 1/2. In Arabidopsis thaliana (Mouse-ear cress), this protein is Phosphoribosylaminoimidazole-succinocarboxamide synthase, chloroplastic (PUR7).